The following is a 370-amino-acid chain: tRNA-specific 2-thiouridylase MnmA 1 (370 aa).

ATP-binding positions include 9–16 and M35; that span reads GMSGGVDS. Residues 95–97 form an interaction with target base in tRNA region; it reads NPD. C100 functions as the Nucleophile in the catalytic mechanism. A disulfide bridge links C100 with C196. Residue G124 participates in ATP binding. The tract at residues 146-148 is interaction with tRNA; the sequence is KDQ. C196 serves as the catalytic Cysteine persulfide intermediate. The tract at residues 306 to 307 is interaction with tRNA; the sequence is RY.

This sequence belongs to the MnmA/TRMU family.

The protein resides in the cytoplasm. It catalyses the reaction S-sulfanyl-L-cysteinyl-[protein] + uridine(34) in tRNA + AH2 + ATP = 2-thiouridine(34) in tRNA + L-cysteinyl-[protein] + A + AMP + diphosphate + H(+). Functionally, catalyzes the 2-thiolation of uridine at the wobble position (U34) of tRNA, leading to the formation of s(2)U34. The protein is tRNA-specific 2-thiouridylase MnmA 1 of Geobacillus kaustophilus (strain HTA426).